Reading from the N-terminus, the 180-residue chain is Adenine phosphoribosyltransferase (180 aa).

This sequence belongs to the purine/pyrimidine phosphoribosyltransferase family. Homodimer.

The protein resides in the cytoplasm. The catalysed reaction is AMP + diphosphate = 5-phospho-alpha-D-ribose 1-diphosphate + adenine. It participates in purine metabolism; AMP biosynthesis via salvage pathway; AMP from adenine: step 1/1. Its function is as follows. Catalyzes a salvage reaction resulting in the formation of AMP, that is energically less costly than de novo synthesis. In Haemophilus influenzae (strain PittEE), this protein is Adenine phosphoribosyltransferase.